The sequence spans 89 residues: Small ribosomal subunit protein bS20 (89 aa).

Residues 1–28 (MTLANIKSAKKRAVQSEKSRQHNASQRS) form a disordered region.

The protein belongs to the bacterial ribosomal protein bS20 family.

Binds directly to 16S ribosomal RNA. This Mannheimia succiniciproducens (strain KCTC 0769BP / MBEL55E) protein is Small ribosomal subunit protein bS20.